A 623-amino-acid chain; its full sequence is Putative ABC transporter ATP-binding protein MG014 homolog (623 aa).

Residues 16 to 325 (LILAPLFTFA…YIVLGLILTS (310 aa)) form the ABC transmembrane type-1 domain. 6 helical membrane-spanning segments follow: residues 27 to 47 (IIID…VFSI), 86 to 106 (VILL…CASI), 157 to 177 (FLRL…FAIA), 180 to 200 (SDMS…IGIL), 266 to 286 (NIPF…LLVF), and 307 to 327 (IFAF…TSLT). The 247-residue stretch at 365-611 (LEFKNVAFGL…CDIYVKMKQA (247 aa)) folds into the ABC transporter domain. 400–407 (GPTGSGKS) is an ATP binding site.

Belongs to the ABC transporter superfamily.

It is found in the cell membrane. This Mycoplasma pneumoniae (strain ATCC 29342 / M129 / Subtype 1) (Mycoplasmoides pneumoniae) protein is Putative ABC transporter ATP-binding protein MG014 homolog.